Consider the following 259-residue polypeptide: Protein unc-50 homolog (259 aa).

The residue at position 1 (M1) is an N-acetylmethionine. The span at M1–L17 shows a compositional bias: polar residues. The disordered stretch occupies residues M1 to A22. The Cytoplasmic segment spans residues M1–P82. The residue at position 6 (S6) is a Phosphoserine. A helical membrane pass occupies residues A83 to L103. Residues D104–L115 are Lumenal-facing. Residues W116 to I136 form a helical membrane-spanning segment. At S137–A163 the chain is on the cytoplasmic side. The chain crosses the membrane as a helical span at residues F164–L184. At T185–T187 the chain is on the lumenal side. A helical transmembrane segment spans residues F188–V208. The Cytoplasmic segment spans residues T209 to T222. Residues V223–G243 form a helical membrane-spanning segment. Over W244–K259 the chain is Lumenal.

The protein belongs to the unc-50 family.

Its subcellular location is the nucleus inner membrane. It is found in the golgi apparatus membrane. Involved in the cell surface expression of neuronal nicotinic receptors. Binds RNA. The polypeptide is Protein unc-50 homolog (UNC50) (Bos taurus (Bovine)).